The chain runs to 820 residues: Serine/threonine-protein phosphatase 4 regulatory subunit 3-B (820 aa).

A WH1 domain is found at 1–100 (MSDTRRRVKV…DEIWEKICQV (100 aa)). The segment covering 682-694 (ELWFNEDDEEEGE) has biased composition (acidic residues). Disordered regions lie at residues 682 to 711 (ELWF…DFPE) and 750 to 820 (AANG…RLGS). The segment covering 701–711 (EKTKPEDDFPE) has biased composition (basic and acidic residues). Composition is skewed to polar residues over residues 750 to 761 (AANGANSTNSKS) and 768 to 790 (PATS…STKG). A compositionally biased stretch (acidic residues) spans 798–809 (YPDDEDEEEEED).

It belongs to the SMEK family. In terms of assembly, serine/threonine-protein phosphatase 4 (PP4) occurs in different assemblies of the catalytic and one or more regulatory subunits.

Its function is as follows. Regulatory subunit of serine/threonine-protein phosphatase 4 (PP4). The polypeptide is Serine/threonine-protein phosphatase 4 regulatory subunit 3-B (Xenopus laevis (African clawed frog)).